A 268-amino-acid chain; its full sequence is Resolvase (268 aa).

The Tyr recombinase domain occupies 47 to 250 (ELPKYLLAPE…FALDVAARHR (204 aa)). Active-site residues include arginine 82, lysine 114, histidine 202, arginine 205, and histidine 228. Tyrosine 237 serves as the catalytic O-(3'-phospho-DNA)-tyrosine intermediate.

It belongs to the 'phage' integrase family.

Acts as a repressor of transcription and as a site-specific resolvase that cleaves at the RfsF site. The chain is Resolvase (resD) from Escherichia coli (strain K12).